The sequence spans 459 residues: Chromosomal replication initiator protein DnaA (459 aa).

The domain I, interacts with DnaA modulators stretch occupies residues 1–90 (MAVSLWQQCI…RPASKPAAPA (90 aa)). The interval 75–124 (RFDIGSRPASKPAAPAASTKSPVAPAAKSPSKPSFNSNEPAATANHRSNM) is disordered. Low complexity predominate over residues 80–108 (SRPASKPAAPAASTKSPVAPAAKSPSKPS). The segment at 91-122 (ASTKSPVAPAAKSPSKPSFNSNEPAATANHRS) is domain II. A compositionally biased stretch (polar residues) spans 109-124 (FNSNEPAATANHRSNM). Residues 123 to 339 (NMNPTYQFDN…GALNRVIANA (217 aa)) are domain III, AAA+ region. ATP is bound by residues Gly-167, Gly-169, Lys-170, and Thr-171. Residues 340-459 (NFTGRPITID…YANLIRTLSS (120 aa)) are domain IV, binds dsDNA.

It belongs to the DnaA family. As to quaternary structure, oligomerizes as a right-handed, spiral filament on DNA at oriC.

Its subcellular location is the cytoplasm. Plays an essential role in the initiation and regulation of chromosomal replication. ATP-DnaA binds to the origin of replication (oriC) to initiate formation of the DNA replication initiation complex once per cell cycle. Binds the DnaA box (a 9 base pair repeat at the origin) and separates the double-stranded (ds)DNA. Forms a right-handed helical filament on oriC DNA; dsDNA binds to the exterior of the filament while single-stranded (ss)DNA is stabiized in the filament's interior. The ATP-DnaA-oriC complex binds and stabilizes one strand of the AT-rich DNA unwinding element (DUE), permitting loading of DNA polymerase. After initiation quickly degrades to an ADP-DnaA complex that is not apt for DNA replication. Binds acidic phospholipids. The sequence is that of Chromosomal replication initiator protein DnaA from Shewanella loihica (strain ATCC BAA-1088 / PV-4).